We begin with the raw amino-acid sequence, 1128 residues long: Probable serine/threonine-protein kinase DDB_G0283337 (1128 aa).

Residues 1–17 (MENNNNNNINKTNTPNN) show a composition bias toward low complexity. Disordered regions lie at residues 1–21 (MENN…SFSP), 60–100 (INHN…NNNN), 131–151 (RESN…NNSN), 236–256 (NNSK…SNSN), and 375–504 (NDNE…NSEQ). Composition is skewed to low complexity over residues 243 to 256 (NSSN…SNSN) and 375 to 502 (NDNE…NNNS). Positions 777–1054 (LSDFSIIGEG…EIQKCKEEYE (278 aa)) constitute a Protein kinase domain. Residues 783-791 (IGEGGFSTV) and Lys-809 each bind ATP. Residue Asp-904 is the Proton acceptor of the active site.

It belongs to the protein kinase superfamily. Ser/Thr protein kinase family.

It catalyses the reaction L-seryl-[protein] + ATP = O-phospho-L-seryl-[protein] + ADP + H(+). It carries out the reaction L-threonyl-[protein] + ATP = O-phospho-L-threonyl-[protein] + ADP + H(+). The polypeptide is Probable serine/threonine-protein kinase DDB_G0283337 (Dictyostelium discoideum (Social amoeba)).